The chain runs to 82 residues: Protein C2 (82 aa).

The sequence is that of Protein C2 (C2) from Sterkiella nova (Ciliate).